Here is a 341-residue protein sequence, read N- to C-terminus: tRNA N6-adenosine threonylcarbamoyltransferase (341 aa).

Fe cation contacts are provided by histidine 111 and histidine 115. Substrate-binding positions include 133-137 (VVSGG), aspartate 166, glycine 179, aspartate 183, and asparagine 271. A Fe cation-binding site is contributed by aspartate 299.

Belongs to the KAE1 / TsaD family. Fe(2+) is required as a cofactor.

The protein resides in the cytoplasm. The catalysed reaction is L-threonylcarbamoyladenylate + adenosine(37) in tRNA = N(6)-L-threonylcarbamoyladenosine(37) in tRNA + AMP + H(+). Its function is as follows. Required for the formation of a threonylcarbamoyl group on adenosine at position 37 (t(6)A37) in tRNAs that read codons beginning with adenine. Is involved in the transfer of the threonylcarbamoyl moiety of threonylcarbamoyl-AMP (TC-AMP) to the N6 group of A37, together with TsaE and TsaB. TsaD likely plays a direct catalytic role in this reaction. The protein is tRNA N6-adenosine threonylcarbamoyltransferase of Fusobacterium nucleatum subsp. nucleatum (strain ATCC 25586 / DSM 15643 / BCRC 10681 / CIP 101130 / JCM 8532 / KCTC 2640 / LMG 13131 / VPI 4355).